A 297-amino-acid polypeptide reads, in one-letter code: Ribosome production factor 2 homolog (297 aa).

The region spanning 28–232 (KKALFCRGAK…VMRKKLADDA (205 aa)) is the Brix domain.

It belongs to the RPF2 family.

It localises to the nucleus. Its subcellular location is the nucleolus. The polypeptide is Ribosome production factor 2 homolog (Caenorhabditis elegans).